Consider the following 363-residue polypeptide: F-box protein At3g44326 (363 aa).

Residues 1–23 (MLSSSSSSTVEQPSRGGSPGINA) form a disordered region. The F-box domain maps to 27 to 66 (DVLRSNILTRLDGSSLAALSCTCSNLNSFCSDESLWRQQC).

This chain is F-box protein At3g44326, found in Arabidopsis thaliana (Mouse-ear cress).